The chain runs to 252 residues: DNA-(apurinic or apyrimidinic site) lyase Nei2 (252 aa).

Catalysis depends on Pro-2, which acts as the Schiff-base intermediate with DNA. Glu-3 serves as the catalytic Proton donor. Lys-51 serves as the catalytic Proton donor (in beta-elimination). The FPG-type zinc-finger motif lies at 216–250; that stretch reads WVYGRAGEPCRRCGTLIQTDRGGERVTYWCPVCQT. Zn(2+)-binding residues include Cys-225, Cys-228, Cys-245, and Cys-248.

Belongs to the FPG family. In terms of assembly, monomer. It depends on Zn(2+) as a cofactor.

It carries out the reaction 2'-deoxyribonucleotide-(2'-deoxyribose 5'-phosphate)-2'-deoxyribonucleotide-DNA = a 3'-end 2'-deoxyribonucleotide-(2,3-dehydro-2,3-deoxyribose 5'-phosphate)-DNA + a 5'-end 5'-phospho-2'-deoxyribonucleoside-DNA + H(+). Functionally, involved in base excision repair of DNA damaged by oxidation or by mutagenic agents. Acts as DNA glycosylase that recognizes and removes damaged bases. Involved in the repair of psoralen-UVA DNA cross-links. A lyase that cleaves single-stranded (ss)DNA but not double-stranded (ds)DNA with an abasic site. Has 5-hydroxyuracil (5-OH-U) glycosylase activity on ssDNA with 5-OH-U, with 10-fold less activity on dsDNA, but weak to no uracil glycosylase activity. Has weak glycosylase activity on thymine glycol and dihydrothymine residues in ssDNA. Cleaves the DNA backbone by beta-delta elimination to generate a single-strand break at the site of the removed base with both 3'- and 5'-phosphates. In Mycolicibacterium smegmatis (strain ATCC 700084 / mc(2)155) (Mycobacterium smegmatis), this protein is DNA-(apurinic or apyrimidinic site) lyase Nei2.